The sequence spans 154 residues: Iron-sulfur cluster assembly enzyme IscU (154 aa).

Belongs to the NifU family. Component of the mitochondrial core iron-sulfur cluster (ISC) assembly complex at least composed of the cystein desulfurase Nfs1, the scaffold protein IscU, the accessory protein bcn92/Isd11/Lyrm4, and probably fh/frataxin. Interacts with Nfs1. The cofactor is Fe(2+). [2Fe-2S] cluster serves as cofactor.

The protein operates within cofactor biosynthesis; iron-sulfur cluster biosynthesis. Scaffold protein for the de novo synthesis of iron-sulfur (Fe-S) clusters within mitochondria, which is required for maturation of both mitochondrial and cytoplasmic [2Fe-2S] and [4Fe-4S] proteins. Component of the mitochondrial core iron-sulfur cluster (ISC) assembly complex; regulates its activity. This is Iron-sulfur cluster assembly enzyme IscU from Drosophila melanogaster (Fruit fly).